A 119-amino-acid chain; its full sequence is Ribosome-binding factor A (119 aa).

This sequence belongs to the RbfA family. In terms of assembly, monomer. Binds 30S ribosomal subunits, but not 50S ribosomal subunits or 70S ribosomes.

The protein resides in the cytoplasm. One of several proteins that assist in the late maturation steps of the functional core of the 30S ribosomal subunit. Associates with free 30S ribosomal subunits (but not with 30S subunits that are part of 70S ribosomes or polysomes). Required for efficient processing of 16S rRNA. May interact with the 5'-terminal helix region of 16S rRNA. This Mycoplasmoides gallisepticum (strain R(low / passage 15 / clone 2)) (Mycoplasma gallisepticum) protein is Ribosome-binding factor A.